The primary structure comprises 114 residues: Phycoerythrin alpha-1 subunit (114 aa).

Residues aspartate 52, serine 53, glutamate 63, arginine 64, cysteine 67, threonine 72, lysine 74, alanine 75, and lysine 84 each contribute to the (2R,3E)-phycoerythrobilin site.

Belongs to the phycoerythrin family. As to quaternary structure, heterotetramer of 2 different alpha chains and 2 identical beta chains which form 2 alpha-beta heterodimers within the heterotetramer. The two alpha-beta heterodimers are rotated to an open configuration in contrast to the closed configuration found in other cryptophyte species due to the insertion of a single amino acid, Asp-65, in a conserved region of the alpha chain. In the open form, the central chromophores are not in physical contact but are separated by a water-filled channel. In terms of processing, contains three phycoerythrobilin chromophores with binding mediated by both the alpha and beta subunits.

Its subcellular location is the plastid. The protein resides in the chloroplast thylakoid membrane. Its function is as follows. Light-harvesting photosynthetic tetrapyrrole chromophore-protein from the phycobiliprotein complex. The polypeptide is Phycoerythrin alpha-1 subunit (Hemiselmis andersenii (Cryptophyte alga)).